The chain runs to 364 residues: Arabinose metabolism transcriptional repressor (364 aa).

The 69-residue stretch at 6–74 (LPKYLQLKQE…QGSGTFVSRP (69 aa)) folds into the HTH gntR-type domain. Residues 34 to 53 (EHEIANQFQLSRHTVRQALG) constitute a DNA-binding region (H-T-H motif).

It localises to the cytoplasm. In terms of biological role, transcriptional repressor of the arabinose utilization genes. This is Arabinose metabolism transcriptional repressor (araR) from Geobacillus stearothermophilus (Bacillus stearothermophilus).